Reading from the N-terminus, the 523-residue chain is 11-oxo-beta-amyrin 30-oxidase (523 aa).

The chain crosses the membrane as a helical span at residues 9-29 (AIWVVLTVILAAIPIWVCHMV). Position 471 (C471) interacts with heme.

This sequence belongs to the cytochrome P450 family. The cofactor is heme. As to expression, expressed in roots, stolons and stems. Not detected in leaves.

The protein resides in the membrane. The enzyme catalyses 11-oxo-beta-amyrin + 3 reduced [NADPH--hemoprotein reductase] + 3 O2 = glycyrrhetinate + 3 oxidized [NADPH--hemoprotein reductase] + 4 H2O + 4 H(+). It catalyses the reaction 11-oxo-beta-amyrin + reduced [NADPH--hemoprotein reductase] + O2 = 30-hydroxy-11-oxo-beta-amyrin + oxidized [NADPH--hemoprotein reductase] + H2O + H(+). The catalysed reaction is 30-hydroxy-11-oxo-beta-amyrin + reduced [NADPH--hemoprotein reductase] + O2 = glycyrrhetaldehyde + oxidized [NADPH--hemoprotein reductase] + 2 H2O + H(+). It carries out the reaction glycyrrhetaldehyde + reduced [NADPH--hemoprotein reductase] + O2 = glycyrrhetinate + oxidized [NADPH--hemoprotein reductase] + H2O + 2 H(+). Functionally, involved in the biosynthesis of Glycyrrhetinic acid (GA), a natural product which exhibits anti-inflammatory activity. Involved in the biosynthesis of the triterpenoid saponin glycyrrhizin. Catalyzes three sequential oxidation steps at C-30 of 11-oxo-beta-amyrin. Also able to catalyze C-30 monohydroxylation of beta-amyrin to produce 30-hydroxy-beta-amyrin. May be also responsible for the oxidation at positions C-22 and C-29 in addition to C-30. This Glycyrrhiza uralensis (Chinese licorice) protein is 11-oxo-beta-amyrin 30-oxidase.